Consider the following 498-residue polypeptide: MKLNKMFLVGALLSLGFASCSKEGNGPAPDSSSTADTHMSVSMSLPQHNRAGDNDYNPIGEYGGVDKINDLTVYVVGDGKIDVRKLSTADLQVNQGASTTSIVTAPFQVKSGEKTVYAIVNITPKVEAALNAATNAADLKVAYEAAYAAFSDAGSEIATLVNNQDQMIMSGKPVVQTILANVSAANASVQNKVPIIVKRAAIRASMTITQQPVNGAYEIKALRPGNVEVGIATVSDLKWAVAQYEKKYYLQQKDNALSPAASFVPASTNDYNGANGAMKHYDYSQLANRITVHQLNAPYSVTDVPNVAYKYVSETTHADNDYRKGNTTYILVKGKLKPVAAMWADGEQAAYQEGGDLFLGLVTGKFYANEANANAANPASGGAGNPRVVTYKAAAVYYYAWLNPNTLDPTTWTMSPARRNNIYNVNISKFRNIGLSGNPFVPTDPDPNNPDTPDNPDTPDPEDPDTPNPEEPLPVQKTYMVVDVTVTPWTLHNYDIEF.

A signal peptide spans Met-1–Ser-19. Residue Cys-20 is the site of N-palmitoyl cysteine attachment. Cys-20 is lipidated: S-diacylglycerol cysteine. The propeptide occupies Cys-20 to Arg-50. A disordered region spans residues Ser-436–Gln-476.

It belongs to the bacteroidetes fimbrillin superfamily. FimA/Mfa1 family. Structural component of the fimbrial stalk. Minor fimbriae are composed of a structural subunit, most often Mfa1, and the accessory subunits Mfa3, Mfa4 and Mfa5. Mfa1 interacts with Mfa2; this anchors the fimbrium in the membrane. Fimbrium assembly occurs by linear, head-to-tail oligomerization of fimbrial subunits. This is mediated via insertion of a C-terminal beta-strand from one subunit into a groove in the N-terminal domain of the following subunit.

It localises to the fimbrium. Its subcellular location is the cell outer membrane. Structural subunit of the minor fimbriae. These filamentous pili are attached to the cell surface; they mediate biofilm formation, adhesion onto host cells and onto other bacteria that are part of the oral microbiome. They play an important role in invasion of periodontal tissues and are recognized as major virulence factors. Mfa1 orthologs from different strains have highly divergent sequences, and this correlates with pathogenicity. This chain is Minor fimbrium subunit Mfa1, found in Porphyromonas gingivalis (Bacteroides gingivalis).